A 464-amino-acid polypeptide reads, in one-letter code: MDFQHRPGGKTGSGGVASSSESNRDRRERLRQLALETIDINKDPYFMKNHLGSYECKLCLTLHNNEGSYLAHTQGKKHQTNLARRAAKEAKEAPAQPAPEKVKVEVKKFVKIGRPGYKVTKQRDSEMGQQSLLFQIDYPEIAEGIMPRHRFMSAYEQRIEPPDRRWQYLLMAAEPYETIAFKVPSREIDKAEGKFWTHWNRETKQFFLQFHFKMEKPPAPPSLPAGPPGVKRPPPPLMNGLPPRPPLPESLPPPPPGGLPLPPMPPTGPAPSGPPGPPQLPPPAPGVHPPAPVVHPPASGVHPPAPGVHPPAPGVHPPAPGVHPPTSGVHPPAPGVHPPAPGVHPPAPGVHPPAPGVHPPAPGVHPPPSAGVHPQAPGVHPAAPAVHPQAPGVHPPAPGMHPQAPGVHPQPPGVHPSAPGVHPQPPGVHPSNPGVHPPTPMPPMLRPPLPSEGPGNIPPPPPTN.

Residue Met-1 is modified to N-acetylmethionine. The disordered stretch occupies residues 1-27; that stretch reads MDFQHRPGGKTGSGGVASSSESNRDRR. Lys-10 is modified (N6-acetyllysine). The segment at 54 to 84 adopts a Matrin-type zinc-finger fold; that stretch reads YECKLCLTLHNNEGSYLAHTQGKKHQTNLAR. Phosphoserine is present on Ser-153. Composition is skewed to pro residues over residues 217-295, 303-323, and 331-369; these read PPAP…PVVH, PPAPGVHPPAPGVHPPAPGVH, and PPAPGVHPPAPGVHPPAPGVHPPAPGVHPPAPGVHPPPS. Positions 217–464 are disordered; that stretch reads PPAPPSLPAG…GNIPPPPPTN (248 aa). Positions 370-392 are enriched in low complexity; sequence AGVHPQAPGVHPAAPAVHPQAPG. A compositionally biased stretch (pro residues) spans 435-464; it reads VHPPTPMPPMLRPPLPSEGPGNIPPPPPTN.

It belongs to the SF3A2 family. As to quaternary structure, component of the 17S U2 SnRNP complex, a ribonucleoprotein complex that contains small nuclear RNA (snRNA) U2 and a number of specific proteins. Part of the SF3A subcomplex of the 17S U2 SnRNP complex which is composed of three subunits; SF3A3/SAP61, SF3A2/SAP62 and SF3A1/SAP114. SF3A associates with the splicing factor SF3B and a 12S RNA unit to form the mature 17S U2 small nuclear ribonucleoprotein complex (17S U2 snRNP). Identified in the spliceosome 'E' complex, a precursor of the spliceosome 'A' complex. Identified in the spliceosome 'A' and 'B' complexes. Identified in the spliceosome 'C' complex. Interacts with HTATSF1.

The protein localises to the nucleus. Component of the 17S U2 SnRNP complex of the spliceosome, a large ribonucleoprotein complex that removes introns from transcribed pre-mRNAs. The 17S U2 SnRNP complex (1) directly participates in early spliceosome assembly and (2) mediates recognition of the intron branch site during pre-mRNA splicing by promoting the selection of the pre-mRNA branch-site adenosine, the nucleophile for the first step of splicing. Within the 17S U2 SnRNP complex, SF3A2 is part of the SF3A subcomplex that contributes to the assembly of the 17S U2 snRNP, and the subsequent assembly of the pre-spliceosome 'E' complex and the pre-catalytic spliceosome 'A' complex. Involved in pre-mRNA splicing as a component of pre-catalytic spliceosome 'B' complexes, including the Bact complex. Interacts directly with the duplex formed by U2 snRNA and the intron. The chain is Splicing factor 3A subunit 2 (SF3A2) from Homo sapiens (Human).